Here is a 273-residue protein sequence, read N- to C-terminus: Outer surface protein A (273 aa).

The N-terminal stretch at 1–16 (MKKYLLGIGLILALIA) is a signal peptide. Cys17 carries N-palmitoyl cysteine lipidation. Cys17 carries S-diacylglycerol cysteine lipidation.

The protein belongs to the OspA lipoprotein family.

It localises to the cell outer membrane. The protein localises to the cell surface. This chain is Outer surface protein A, found in Borreliella burgdorferi (Lyme disease spirochete).